The chain runs to 222 residues: Deoxyribose-phosphate aldolase (222 aa).

The active-site Proton donor/acceptor is the Asp-90. The active-site Schiff-base intermediate with acetaldehyde is Lys-152. The active-site Proton donor/acceptor is the Lys-181.

The protein belongs to the DeoC/FbaB aldolase family. DeoC type 1 subfamily.

The protein resides in the cytoplasm. The catalysed reaction is 2-deoxy-D-ribose 5-phosphate = D-glyceraldehyde 3-phosphate + acetaldehyde. It functions in the pathway carbohydrate degradation; 2-deoxy-D-ribose 1-phosphate degradation; D-glyceraldehyde 3-phosphate and acetaldehyde from 2-deoxy-alpha-D-ribose 1-phosphate: step 2/2. In terms of biological role, catalyzes a reversible aldol reaction between acetaldehyde and D-glyceraldehyde 3-phosphate to generate 2-deoxy-D-ribose 5-phosphate. This chain is Deoxyribose-phosphate aldolase, found in Pectobacterium atrosepticum (strain SCRI 1043 / ATCC BAA-672) (Erwinia carotovora subsp. atroseptica).